The sequence spans 67 residues: MQVYGCCELVRELYAQIGSGDQGYIPQAISCAVKALNDIAADESLPKETREKAAFAAANLLISDFED.

Belongs to the UPF0253 family.

The sequence is that of UPF0253 protein VV2574 from Vibrio vulnificus (strain YJ016).